Consider the following 467-residue polypeptide: Ribulose bisphosphate carboxylase large chain (467 aa).

Position 5 is an N6,N6,N6-trimethyllysine (lysine 5). Positions 114 and 164 each coordinate substrate. The active-site Proton acceptor is the lysine 166. Residue lysine 168 participates in substrate binding. The Mg(2+) site is built by lysine 192, aspartate 194, and glutamate 195. Position 192 is an N6-carboxylysine (lysine 192). The active-site Proton acceptor is histidine 285. Substrate is bound by residues arginine 286, histidine 318, and serine 370.

Belongs to the RuBisCO large chain family. Type I subfamily. Heterohexadecamer of 8 large chains and 8 small chains; disulfide-linked. The disulfide link is formed within the large subunit homodimers. The cofactor is Mg(2+). The disulfide bond which can form in the large chain dimeric partners within the hexadecamer appears to be associated with oxidative stress and protein turnover.

It is found in the plastid. It localises to the chloroplast. The enzyme catalyses 2 (2R)-3-phosphoglycerate + 2 H(+) = D-ribulose 1,5-bisphosphate + CO2 + H2O. It catalyses the reaction D-ribulose 1,5-bisphosphate + O2 = 2-phosphoglycolate + (2R)-3-phosphoglycerate + 2 H(+). Functionally, ruBisCO catalyzes two reactions: the carboxylation of D-ribulose 1,5-bisphosphate, the primary event in carbon dioxide fixation, as well as the oxidative fragmentation of the pentose substrate in the photorespiration process. Both reactions occur simultaneously and in competition at the same active site. This is Ribulose bisphosphate carboxylase large chain from Scutellaria bolanderi (Sierra skullcap).